We begin with the raw amino-acid sequence, 120 residues long: Aspartate 1-decarboxylase (120 aa).

Catalysis depends on serine 25, which acts as the Schiff-base intermediate with substrate; via pyruvic acid. Serine 25 is subject to Pyruvic acid (Ser). Position 57 (threonine 57) interacts with substrate. Tyrosine 58 (proton donor) is an active-site residue. Glycine 73 to alanine 75 is a binding site for substrate.

The protein belongs to the PanD family. In terms of assembly, heterooctamer of four alpha and four beta subunits. Requires pyruvate as cofactor. Is synthesized initially as an inactive proenzyme, which is activated by self-cleavage at a specific serine bond to produce a beta-subunit with a hydroxyl group at its C-terminus and an alpha-subunit with a pyruvoyl group at its N-terminus.

It is found in the cytoplasm. It catalyses the reaction L-aspartate + H(+) = beta-alanine + CO2. It participates in cofactor biosynthesis; (R)-pantothenate biosynthesis; beta-alanine from L-aspartate: step 1/1. Functionally, catalyzes the pyruvoyl-dependent decarboxylation of aspartate to produce beta-alanine. In Cupriavidus taiwanensis (strain DSM 17343 / BCRC 17206 / CCUG 44338 / CIP 107171 / LMG 19424 / R1) (Ralstonia taiwanensis (strain LMG 19424)), this protein is Aspartate 1-decarboxylase.